We begin with the raw amino-acid sequence, 139 residues long: D-ribose pyranase (139 aa).

The Proton donor role is filled by histidine 20. Residues aspartate 28, histidine 106, and tyrosine 128–asparagine 130 each bind substrate.

The protein belongs to the RbsD / FucU family. RbsD subfamily. Homodecamer.

It localises to the cytoplasm. It catalyses the reaction beta-D-ribopyranose = beta-D-ribofuranose. The protein operates within carbohydrate metabolism; D-ribose degradation; D-ribose 5-phosphate from beta-D-ribopyranose: step 1/2. Catalyzes the interconversion of beta-pyran and beta-furan forms of D-ribose. The polypeptide is D-ribose pyranase (Edwardsiella ictaluri (strain 93-146)).